Reading from the N-terminus, the 350-residue chain is 5'-tyrosyl-DNA phosphodiesterase (350 aa).

The tract at residues Asn113–Leu117 is interaction with 5' end of substrate DNA. Residues Asp115 and Glu145 each coordinate Mg(2+). The segment at His219 to Arg224 is interaction with 5' end of substrate DNA. Asp258 acts as the Proton donor/acceptor in catalysis. Residues Asn260–Arg262 are interaction with 5' end of substrate DNA.

It belongs to the CCR4/nocturin family. TTRAP/TDP2 subfamily. Mg(2+) is required as a cofactor. It depends on Mn(2+) as a cofactor.

The protein localises to the nucleus. It localises to the PML body. DNA repair enzyme that can remove a variety of covalent adducts from DNA through hydrolysis of a 5'-phosphodiester bond, giving rise to DNA with a free 5' phosphate. Catalyzes the hydrolysis of dead-end complexes between DNA and the topoisomerase 2 (top2) active site tyrosine residue. Hydrolyzes 5'-phosphoglycolates on protruding 5' ends on DNA double-strand breaks (DSBs) due to DNA damage by radiation and free radicals. The sequence is that of 5'-tyrosyl-DNA phosphodiesterase from Caenorhabditis briggsae.